Consider the following 347-residue polypeptide: Isopentenyl-diphosphate delta-isomerase (347 aa).

5–6 provides a ligand contact to substrate; that stretch reads RK. Residues serine 61, 62–64, serine 92, and asparagine 120 each bind FMN; that span reads SMT. 92–94 is a binding site for substrate; the sequence is SMR. Position 159 (glutamine 159) interacts with substrate. Glutamate 160 lines the Mg(2+) pocket. FMN-binding positions include lysine 189, serine 214, threonine 219, 269–271, and 290–291; these read GLR and AR.

The protein belongs to the IPP isomerase type 2 family. In terms of assembly, homooctamer. Dimer of tetramers. The cofactor is FMN. NADPH is required as a cofactor. Mg(2+) serves as cofactor.

The protein localises to the cytoplasm. The catalysed reaction is isopentenyl diphosphate = dimethylallyl diphosphate. Its function is as follows. Involved in the biosynthesis of isoprenoids. Catalyzes the 1,3-allylic rearrangement of the homoallylic substrate isopentenyl (IPP) to its allylic isomer, dimethylallyl diphosphate (DMAPP). This chain is Isopentenyl-diphosphate delta-isomerase, found in Thermoplasma volcanium (strain ATCC 51530 / DSM 4299 / JCM 9571 / NBRC 15438 / GSS1).